The chain runs to 508 residues: Flagellin (508 aa).

It belongs to the bacterial flagellin family.

It is found in the secreted. Its subcellular location is the bacterial flagellum. In terms of biological role, flagellin is the subunit protein which polymerizes to form the filaments of bacterial flagella. In Salmonella oranienberg, this protein is Flagellin (fliC).